We begin with the raw amino-acid sequence, 729 residues long: Phosphoribosylformylglycinamidine synthase subunit PurL (729 aa).

Residue His54 is part of the active site. The ATP site is built by Tyr57 and Lys96. Position 98 (Glu98) interacts with Mg(2+). Substrate is bound by residues 99–102 (SHNH) and Arg121. The Proton acceptor role is filled by His100. Residue Asp122 coordinates Mg(2+). Residue Gln245 coordinates substrate. Position 273 (Asp273) interacts with Mg(2+). 317–319 (ETQ) contacts substrate. Residues Asp495 and Gly532 each contribute to the ATP site. Residue Asn533 coordinates Mg(2+). Ser535 provides a ligand contact to substrate.

This sequence belongs to the FGAMS family. In terms of assembly, monomer. Part of the FGAM synthase complex composed of 1 PurL, 1 PurQ and 2 PurS subunits.

The protein resides in the cytoplasm. The catalysed reaction is N(2)-formyl-N(1)-(5-phospho-beta-D-ribosyl)glycinamide + L-glutamine + ATP + H2O = 2-formamido-N(1)-(5-O-phospho-beta-D-ribosyl)acetamidine + L-glutamate + ADP + phosphate + H(+). The protein operates within purine metabolism; IMP biosynthesis via de novo pathway; 5-amino-1-(5-phospho-D-ribosyl)imidazole from N(2)-formyl-N(1)-(5-phospho-D-ribosyl)glycinamide: step 1/2. Its function is as follows. Part of the phosphoribosylformylglycinamidine synthase complex involved in the purines biosynthetic pathway. Catalyzes the ATP-dependent conversion of formylglycinamide ribonucleotide (FGAR) and glutamine to yield formylglycinamidine ribonucleotide (FGAM) and glutamate. The FGAM synthase complex is composed of three subunits. PurQ produces an ammonia molecule by converting glutamine to glutamate. PurL transfers the ammonia molecule to FGAR to form FGAM in an ATP-dependent manner. PurS interacts with PurQ and PurL and is thought to assist in the transfer of the ammonia molecule from PurQ to PurL. This chain is Phosphoribosylformylglycinamidine synthase subunit PurL, found in Staphylococcus saprophyticus subsp. saprophyticus (strain ATCC 15305 / DSM 20229 / NCIMB 8711 / NCTC 7292 / S-41).